Consider the following 1277-residue polypeptide: DNA repair protein RAD5B (1277 aa).

Residues 271 to 293 (KLEQENDDLFSSGDSDGTSAKRR) are disordered. Residues 674-871 (PTATQMARGG…YSLLCFLHVE (198 aa)) enclose the Helicase ATP-binding domain. 687 to 694 (DAMGLGKT) contributes to the ATP binding site. The DEAH box signature appears at 822–825 (DEAH). An RING-type zinc finger spans residues 1040–1080 (CPICLESADDPVLTPCAHRMCRECLLTSWRSPSCGLCPICR). The region spanning 1113–1277 (ELLKCLEKIK…RLEELKMLFR (165 aa)) is the Helicase C-terminal domain.

Belongs to the SNF2/RAD54 helicase family. RAD16 subfamily.

Its subcellular location is the nucleus. In terms of biological role, possesses intrinsic ATP-dependent nucleosome-remodeling activity. This activity may be required for DNA repair. Does not seem to be required for DNA repair and regulation of homologous recombination (HR). The polypeptide is DNA repair protein RAD5B (Arabidopsis thaliana (Mouse-ear cress)).